The primary structure comprises 114 residues: Large ribosomal subunit protein bL19 (114 aa).

The protein belongs to the bacterial ribosomal protein bL19 family.

Its function is as follows. This protein is located at the 30S-50S ribosomal subunit interface and may play a role in the structure and function of the aminoacyl-tRNA binding site. The polypeptide is Large ribosomal subunit protein bL19 (Clostridium botulinum (strain ATCC 19397 / Type A)).